Reading from the N-terminus, the 99-residue chain is Nucleoid-associated protein LL0120 (99 aa).

It belongs to the YbaB/EbfC family. In terms of assembly, homodimer.

Its subcellular location is the cytoplasm. The protein localises to the nucleoid. In terms of biological role, binds to DNA and alters its conformation. May be involved in regulation of gene expression, nucleoid organization and DNA protection. The sequence is that of Nucleoid-associated protein LL0120 (ybcG) from Lactococcus lactis subsp. lactis (strain IL1403) (Streptococcus lactis).